The chain runs to 88 residues: Large ribosomal subunit protein bL27 (88 aa).

A disordered region spans residues 1–21; the sequence is MAHKKAGGSSRNGRDSDGRRL.

It belongs to the bacterial ribosomal protein bL27 family.

The chain is Large ribosomal subunit protein bL27 from Methylobacterium nodulans (strain LMG 21967 / CNCM I-2342 / ORS 2060).